A 405-amino-acid chain; its full sequence is UDP-N-acetylglucosamine--N-acetylmuramyl-(pentapeptide) pyrophosphoryl-undecaprenol N-acetylglucosamine transferase (405 aa).

Residues 11-13, asparagine 127, arginine 168, serine 191, isoleucine 248, and glutamine 293 contribute to the UDP-N-acetyl-alpha-D-glucosamine site; that span reads TGG.

This sequence belongs to the glycosyltransferase 28 family. MurG subfamily.

It localises to the cell inner membrane. It catalyses the reaction di-trans,octa-cis-undecaprenyl diphospho-N-acetyl-alpha-D-muramoyl-L-alanyl-D-glutamyl-meso-2,6-diaminopimeloyl-D-alanyl-D-alanine + UDP-N-acetyl-alpha-D-glucosamine = di-trans,octa-cis-undecaprenyl diphospho-[N-acetyl-alpha-D-glucosaminyl-(1-&gt;4)]-N-acetyl-alpha-D-muramoyl-L-alanyl-D-glutamyl-meso-2,6-diaminopimeloyl-D-alanyl-D-alanine + UDP + H(+). It functions in the pathway cell wall biogenesis; peptidoglycan biosynthesis. Functionally, cell wall formation. Catalyzes the transfer of a GlcNAc subunit on undecaprenyl-pyrophosphoryl-MurNAc-pentapeptide (lipid intermediate I) to form undecaprenyl-pyrophosphoryl-MurNAc-(pentapeptide)GlcNAc (lipid intermediate II). This chain is UDP-N-acetylglucosamine--N-acetylmuramyl-(pentapeptide) pyrophosphoryl-undecaprenol N-acetylglucosamine transferase, found in Sorangium cellulosum (strain So ce56) (Polyangium cellulosum (strain So ce56)).